Here is a 143-residue protein sequence, read N- to C-terminus: Crossover junction endodeoxyribonuclease Hjc (143 aa).

Glu-12 contributes to the Mg(2+) binding site. Ser-32 is an active-site residue. Mg(2+) contacts are provided by Asp-42 and Glu-55.

It belongs to the Holliday junction resolvase Hjc family. As to quaternary structure, homodimer. Interacts with PCNA subunit PCNA1. It depends on Mg(2+) as a cofactor.

It catalyses the reaction Endonucleolytic cleavage at a junction such as a reciprocal single-stranded crossover between two homologous DNA duplexes (Holliday junction).. With respect to regulation, autoinhibits at very high concentrations, possibly because of extreme junction distortion. Inhibition (and activity at low concentrations of enzyme) is stimulated by dsDNA and Sso7d. Activity stimulated by PCNA subunit PCNA1. A structure-specific endonuclease that resolves Holliday junction (HJ) intermediates during genetic recombination; may have some degree of sequence preference in a mobile junction. Cleaves 4-way DNA junctions introducing paired nicks in opposing strands, leaving a 5'-terminal phosphate and a 3'-terminal hydroxyl group that are subsequently ligated to produce recombinant products. Can cleave all 4 strands 3 bases 3' of the junction center. Cleaves both mobile and immobile junctions. Modifies the structure of the 4-way DNA junction, a model Holliday junction structure. The protein forms multiple complexes with 4-way DNA, suggesting more than 1 homodimer can bind to each junction. The chain is Crossover junction endodeoxyribonuclease Hjc from Saccharolobus solfataricus (strain ATCC 35092 / DSM 1617 / JCM 11322 / P2) (Sulfolobus solfataricus).